Consider the following 321-residue polypeptide: Peptidase 1 (321 aa).

An N-terminal signal peptide occupies residues 1 to 18 (MKFVLAIASLLVLSTVYA). A propeptide spans 19-98 (RPASIKTFEE…LKTQFDLNAE (80 aa)) (activation peptide). Cystine bridges form between Cys-102–Cys-216, Cys-130–Cys-170, and Cys-164–Cys-202. Residue Cys-133 is part of the active site. Asn-151 carries an N-linked (GlcNAc...) asparagine glycan. Active-site residues include His-269 and Arg-288.

The protein belongs to the peptidase C1 family. As to quaternary structure, monomer.

It is found in the secreted. It catalyses the reaction Broad endopeptidase specificity.. In terms of biological role, thiol protease that hydrolyzes proteins, with a preference for Phe or basic residues. This Dermatophagoides farinae (American house dust mite) protein is Peptidase 1 (DERF1).